The primary structure comprises 91 residues: Small ribosomal subunit protein uS19 (91 aa).

The protein belongs to the universal ribosomal protein uS19 family.

In terms of biological role, protein S19 forms a complex with S13 that binds strongly to the 16S ribosomal RNA. The sequence is that of Small ribosomal subunit protein uS19 from Prochlorococcus marinus (strain SARG / CCMP1375 / SS120).